The primary structure comprises 196 residues: Interleukin-23 subunit alpha (196 aa).

Residues 1–21 (MLDCRAIILLWLLPWATQGLA) form the signal peptide.

This sequence belongs to the IL-6 superfamily. In terms of assembly, heterodimer with IL12B; disulfide-linked. The heterodimer is known as interleukin IL-23. Interacts with IL23R; this interaction enables recruitment of IL12RB1.

It localises to the secreted. Associates with IL12B to form the pro-inflammatory cytokine IL-23 that plays different roles in innate and adaptive immunity. Released by antigen-presenting cells such as dendritic cells or macrophages, binds to a heterodimeric receptor complex composed of IL12RB1 and IL23R to activate JAK2 and TYK2 which then phosphorylate the receptor to form a docking site leading to the phosphorylation of STAT3 and STAT4. This process leads to activation of several pathways including p38 MAPK or NF-kappa-B and promotes the production of pro-inflammatory cytokines such as interleukin-17A/IL17A. In turn, participates in the early and effective intracellular bacterial clearance. Promotes the expansion and survival of T-helper 17 cells, a CD4-positive helper T-cell subset that produces IL-17, as well as other IL-17-producing cells. The chain is Interleukin-23 subunit alpha (Il23a) from Rattus norvegicus (Rat).